The chain runs to 271 residues: uncharacterized protein (271 aa).

Residues 1–20 (MPDLHTLPAGSRPERAIRNN) are disordered.

This sequence belongs to the PEP2 family.

This is an uncharacterized protein from Aspergillus terreus (strain NIH 2624 / FGSC A1156).